A 383-amino-acid polypeptide reads, in one-letter code: ATP phosphoribosyltransferase regulatory subunit (383 aa).

Belongs to the class-II aminoacyl-tRNA synthetase family. HisZ subfamily. As to quaternary structure, heteromultimer composed of HisG and HisZ subunits.

It is found in the cytoplasm. It participates in amino-acid biosynthesis; L-histidine biosynthesis; L-histidine from 5-phospho-alpha-D-ribose 1-diphosphate: step 1/9. Its function is as follows. Required for the first step of histidine biosynthesis. May allow the feedback regulation of ATP phosphoribosyltransferase activity by histidine. In Cupriavidus metallidurans (strain ATCC 43123 / DSM 2839 / NBRC 102507 / CH34) (Ralstonia metallidurans), this protein is ATP phosphoribosyltransferase regulatory subunit.